We begin with the raw amino-acid sequence, 290 residues long: ATP synthase gamma chain (290 aa).

Belongs to the ATPase gamma chain family. F-type ATPases have 2 components, CF(1) - the catalytic core - and CF(0) - the membrane proton channel. CF(1) has five subunits: alpha(3), beta(3), gamma(1), delta(1), epsilon(1). CF(0) has three main subunits: a, b and c.

Its subcellular location is the cell membrane. Functionally, produces ATP from ADP in the presence of a proton gradient across the membrane. The gamma chain is believed to be important in regulating ATPase activity and the flow of protons through the CF(0) complex. This chain is ATP synthase gamma chain, found in Roseiflexus castenholzii (strain DSM 13941 / HLO8).